The following is a 2111-amino-acid chain: Fatty acid synthase beta subunit aflB (2111 aa).

Residues 200–565 form an acetyltransferase (AT) domain region; sequence IVTVFNGQGV…KAGTAARVIL (366 aa). Positions 618 to 863 are enoyl reductase (ER) domain; the sequence is SRALGLPPVM…AIVDTPGVPD (246 aa). Residues 1195–1688 are dehydratase (DH) domain; the sequence is GTKPSWRKAL…SPGETLLVDI (494 aa). Residues 1606 to 1708 enclose the MaoC-like domain; sequence EMPTSSDQYA…IVVATARSES (103 aa). Positions 1727–2091 are malonyl/palmitoyl transferase (MT/PT) domain; the sequence is YLFTGQGSQK…FENVLAISES (365 aa).

It belongs to the fungal fatty acid synthetase subunit beta family. In terms of assembly, [Alpha(6)beta(6)] hexamers of two multifunctional subunits (alpha and beta).

It carries out the reaction acetyl-CoA + n malonyl-CoA + 2n NADPH + 4n H(+) = a long-chain-acyl-CoA + n CoA + n CO2 + 2n NADP(+).. It catalyses the reaction holo-[ACP] + acetyl-CoA = acetyl-[ACP] + CoA. The catalysed reaction is holo-[ACP] + malonyl-CoA = malonyl-[ACP] + CoA. The enzyme catalyses a (3R)-hydroxyacyl-[ACP] = a (2E)-enoyl-[ACP] + H2O. It carries out the reaction a 2,3-saturated acyl-[ACP] + NAD(+) = a (2E)-enoyl-[ACP] + NADH + H(+). It catalyses the reaction (9Z)-octadecenoyl-[ACP] + H2O = (9Z)-octadecenoate + holo-[ACP] + H(+). It participates in secondary metabolite biosynthesis. Fatty acid synthase beta subunit; part of the gene cluster that mediates the biosynthesis of aspercryptins, linear lipopeptides built from six amino acids including 2 highly unusual and nonproteogenic amino acids, 2-amino-octanoic acid (2aoa) and 2-amino-dodecanol (2adol). The core structure of aspercryptins is as follows: Ser/Ala-Thr-Ile/Val-2aoa-Asn-2adol. The first step of aspercryptin biosynthesis is the generation of the fatty acid precursors, octanoic and dodecanoic acids, by the FAS subunits atnF and atnM. The fatty acid precursors are likely transformed into the corresponding alpha-amino fatty acids in three steps. First, they are hydroxylated by the cytochrome P450 monooxygenase atnE, then oxidized to the corresponding alpha-keto acids by the NAD(P)-dependent oxidoreductase atnD, and finally converted to the alpha-amino fatty acids by the PLP-dependent aminotransferases atnH or atnJ. the alpha-amino fatty acids, 2-amino-octanoic and 2-amino-dodecanoic acids, are recognized, activated, and covalently tethered to the NRPS atnA by its fourth and sixth adenylation domains. The second module of atnA is the Thr module and contains an epimerase (E) domain responsible for the epimerization of Thr to D-allo-Thr. Additionally, despite atnA having only one epimerase domain, the first amino acid of aspercryptin A1 is D-Ser, suggesting that serine is either loaded directly as D-Ser on the first module or that the epimerase domain in the threonine module epimerizes both L-Ser and L-Thr. After condensation of the hexapeptide of aspercryptin, the C-terminal reductase (TE) domain might be involved in the reductive release and production of the aldehyde hexapeptide. Further reduction would generate aspercryptins. The variety of aspercryptins produced reflects the flexibility of the atnA NRPS, allowing incorporation of alanine instead of serine, valine for isoleucine, and a C10 fatty amino alcohol instead of the C12 version. AtnB seems to be involved in the selectivity for Ile versus Val by the third module. Moreover, type B, C and D aspercryptins have an additional N-terminal cichorine, acetyl and propionyl group respectively. This is Fatty acid synthase beta subunit aflB from Emericella nidulans (strain FGSC A4 / ATCC 38163 / CBS 112.46 / NRRL 194 / M139) (Aspergillus nidulans).